Reading from the N-terminus, the 1150-residue chain is DNA polymerase (1150 aa).

The segment at 1–53 is disordered; it reads MSLVQGHGTSGLFTEPPNPINQQESSGPSLPAQDAAQAFASSPRAGATSTIVN.

The protein belongs to the DNA polymerase type-B family. In terms of assembly, heterodimer with the terminal protein; this heterodimer binds to bp 9 to 18 of the genome. Forms a complex with viral pTP, DBP and hosts NFIA and POU2F1/OCT1 for initiation of replication.

It is found in the host nucleus. It catalyses the reaction DNA(n) + a 2'-deoxyribonucleoside 5'-triphosphate = DNA(n+1) + diphosphate. Eukaryotic-type DNA polymerase involved in viral genomic replication. DNA synthesis is protein primed, and acts in a strand displacement replication. Assembles in complex with viral pTP, DBP, host NFIA and host POU2F1/OCT1 on viral origin of replication. The polymerase covalently transfers dCMP onto pTP, thereby initiating complementary strand synthesis. The chain is DNA polymerase from Canis lupus familiaris (Dog).